A 308-amino-acid polypeptide reads, in one-letter code: Methionyl-tRNA formyltransferase (308 aa).

110-113 lines the (6S)-5,6,7,8-tetrahydrofolate pocket; sequence SLLP.

Belongs to the Fmt family.

It carries out the reaction L-methionyl-tRNA(fMet) + (6R)-10-formyltetrahydrofolate = N-formyl-L-methionyl-tRNA(fMet) + (6S)-5,6,7,8-tetrahydrofolate + H(+). In terms of biological role, attaches a formyl group to the free amino group of methionyl-tRNA(fMet). The formyl group appears to play a dual role in the initiator identity of N-formylmethionyl-tRNA by promoting its recognition by IF2 and preventing the misappropriation of this tRNA by the elongation apparatus. This chain is Methionyl-tRNA formyltransferase, found in Mycobacterium sp. (strain KMS).